Reading from the N-terminus, the 213-residue chain is Imidazole glycerol phosphate synthase subunit HisH (213 aa).

One can recognise a Glutamine amidotransferase type-1 domain in the interval 1–212; sequence MLAILDYKAG…HRYCTEAADA (212 aa). The active-site Nucleophile is Cys-79. Active-site residues include His-187 and Glu-189.

Heterodimer of HisH and HisF.

The protein resides in the cytoplasm. It carries out the reaction 5-[(5-phospho-1-deoxy-D-ribulos-1-ylimino)methylamino]-1-(5-phospho-beta-D-ribosyl)imidazole-4-carboxamide + L-glutamine = D-erythro-1-(imidazol-4-yl)glycerol 3-phosphate + 5-amino-1-(5-phospho-beta-D-ribosyl)imidazole-4-carboxamide + L-glutamate + H(+). The catalysed reaction is L-glutamine + H2O = L-glutamate + NH4(+). It participates in amino-acid biosynthesis; L-histidine biosynthesis; L-histidine from 5-phospho-alpha-D-ribose 1-diphosphate: step 5/9. IGPS catalyzes the conversion of PRFAR and glutamine to IGP, AICAR and glutamate. The HisH subunit catalyzes the hydrolysis of glutamine to glutamate and ammonia as part of the synthesis of IGP and AICAR. The resulting ammonia molecule is channeled to the active site of HisF. This chain is Imidazole glycerol phosphate synthase subunit HisH, found in Nitratidesulfovibrio vulgaris (strain DP4) (Desulfovibrio vulgaris).